The sequence spans 230 residues: Uracil-DNA glycosylase (230 aa).

The active-site Proton acceptor is Asp-70.

Belongs to the uracil-DNA glycosylase (UDG) superfamily. UNG family.

Its subcellular location is the cytoplasm. The enzyme catalyses Hydrolyzes single-stranded DNA or mismatched double-stranded DNA and polynucleotides, releasing free uracil.. In terms of biological role, excises uracil residues from the DNA which can arise as a result of misincorporation of dUMP residues by DNA polymerase or due to deamination of cytosine. The chain is Uracil-DNA glycosylase from Campylobacter concisus (strain 13826).